Here is a 533-residue protein sequence, read N- to C-terminus: Di/tripeptide-binding protein 4 (533 aa).

The N-terminal stretch at 1 to 25 is a signal peptide; sequence MLHPLLRHLPLALALALCAAGAAQA.

This sequence belongs to the bacterial solute-binding protein 5 family. As to quaternary structure, the complex is composed of two ATP-binding proteins (DppD and DppF), two transmembrane proteins (DppB and DppC) and a solute-binding protein (DppA4). Five orthologous SBPs (DppA1-A5) are present in P.aeruginosa, which increases the substrate specificity of the DppBCDF transporter.

Its function is as follows. Part of the ABC transporter DppABCDF involved in the uptake of various di/tripeptides. Prefers dipeptides with acidic residues at the C-terminal end. Efficiently uses tripeptides. The chain is Di/tripeptide-binding protein 4 from Pseudomonas aeruginosa (strain UCBPP-PA14).